A 204-amino-acid polypeptide reads, in one-letter code: Movement protein TGB2 (204 aa).

The Cytoplasmic segment spans residues M1 to K11. A helical transmembrane segment spans residues Y12–N32. Residues Q33–A72 are Lumenal-facing. A helical membrane pass occupies residues S73–W93. Topologically, residues R94–S204 are cytoplasmic.

This sequence belongs to the virgaviridae/benyvirus TGB2 movement protein family. As to quaternary structure, interacts with movement protein TGB3. TGB1-TGB3-TGB2 complex formation is enhanced by ATP hydrolysis.

Its subcellular location is the host cell junction. The protein resides in the host plasmodesma. The protein localises to the host endoplasmic reticulum membrane. It localises to the host cytoplasm. It is found in the host cytoskeleton. Participates in the transport of viral genome to neighboring plant cells directly through plasmodesmata, without any budding. TGBp2 and TGBp3 are necessary for intracellular delivery of TGBp1-containing vRNPs to plasmodesmata. Can gate plasmodesmata and increase their size exclusion limit. To a lesser extent than TGB3, induces host actin cytoskeleton network thickening, which probably plays a major role in virus cell-to-cell movement. The sequence is that of Movement protein TGB2 from Barley stripe mosaic virus (BSMV).